The primary structure comprises 123 residues: Large ribosomal subunit protein uL29 (123 aa).

The residue at position 19 (Lys19) is an N6-acetyllysine. Residue Lys25 forms a Glycyl lysine isopeptide (Lys-Gly) (interchain with G-Cter in SUMO2) linkage. Position 29 is a phosphoserine (Ser29). An N6-acetyllysine modification is found at Lys43.

It belongs to the universal ribosomal protein uL29 family. As to quaternary structure, component of the large ribosomal subunit.

The protein localises to the cytoplasm. In terms of biological role, component of the large ribosomal subunit. The ribosome is a large ribonucleoprotein complex responsible for the synthesis of proteins in the cell. The protein is Large ribosomal subunit protein uL29 (RPL35) of Sus scrofa (Pig).